The chain runs to 53 residues: uncharacterized protein (53 aa).

It belongs to the ycf15 family.

It is found in the plastid. It localises to the chloroplast. This is an uncharacterized protein from Helianthus annuus (Common sunflower).